The chain runs to 427 residues: Trigger factor (427 aa).

In terms of domain architecture, PPIase FKBP-type spans 163–248; the sequence is GDTVVIDFVG…VHEVKAKEVP (86 aa).

It belongs to the FKBP-type PPIase family. Tig subfamily.

It is found in the cytoplasm. The enzyme catalyses [protein]-peptidylproline (omega=180) = [protein]-peptidylproline (omega=0). In terms of biological role, involved in protein export. Acts as a chaperone by maintaining the newly synthesized protein in an open conformation. Functions as a peptidyl-prolyl cis-trans isomerase. This is Trigger factor from Streptococcus equi subsp. zooepidemicus (strain MGCS10565).